Reading from the N-terminus, the 129-residue chain is Large ribosomal subunit protein bL12c (129 aa).

This sequence belongs to the bacterial ribosomal protein bL12 family. In terms of assembly, homodimer. Part of the ribosomal stalk of the 50S ribosomal subunit. Forms a multimeric L10(L12)X complex, where L10 forms an elongated spine to which 2 to 4 L12 dimers bind in a sequential fashion. Binds GTP-bound translation factors.

Its subcellular location is the plastid. The protein localises to the chloroplast. Forms part of the ribosomal stalk which helps the ribosome interact with GTP-bound translation factors. Is thus essential for accurate translation. This chain is Large ribosomal subunit protein bL12c, found in Tupiella akineta (Green alga).